The following is a 365-amino-acid chain: Potassium channel subfamily K member 9 (365 aa).

Topologically, residues 1–8 are cytoplasmic; sequence MKKQNVRT. A helical transmembrane segment spans residues 9–29; it reads LSLIACTFTYLLVGAAVFDAL. At 30-88 the chain is on the extracellular side; that stretch reads ESDHEMREEEKLKAEEIRIRGKYNISTEDYRQLELVILQSEPHRAGVQWKFAGSFYFAI. N53 is a glycosylation site (N-linked (GlcNAc...) asparagine). Residues 89 to 101 constitute an intramembrane region (pore-forming); it reads TVITTIGYGHAAP. The K(+) site is built by T93, I94, G95, and Y96. Residues 93–98 form a selectivity filter 1 region; sequence TIGYGH. Residues 102–107 are Extracellular-facing; that stretch reads GTDAGK. The helical transmembrane segment at 108 to 128 threads the bilayer; it reads AFCMFYAVLGIPLTLVMFQSL. The Cytoplasmic portion of the chain corresponds to 129–158; it reads GERMNTFVRYLLKRIKKCCGMRNTEVSMEN. The chain crosses the membrane as a helical span at residues 159 to 179; it reads MVTVGFFSCMGTLCIGAAAFS. Topologically, residues 180–194 are extracellular; the sequence is QCEEWSFFHAYYYCF. An intramembrane region (pore-forming) is located at residues 195–207; sequence ITLTTIGFGDYVA. K(+) is bound by residues T199, I200, G201, and F202. Residues 199-204 form a selectivity filter 2 region; it reads TIGFGD. The Extracellular segment spans residues 208 to 218; that stretch reads LQSKGALQRKP. The chain crosses the membrane as a helical span at residues 219-239; the sequence is FYVAFSFMYILVGLTVIGAFL. The Cytoplasmic segment spans residues 240–365; that stretch reads NLVVLRFLTM…HRLMLRRKSV (126 aa). Positions 243–248 are X-gate; sequence VLRFLT.

The protein belongs to the two pore domain potassium channel (TC 1.A.1.8) family. As to quaternary structure, homodimer. Heterodimer with KCNK1. Heterodimer with KCNK3. As to expression, highly expressed in the brain.

Its subcellular location is the cell membrane. The protein resides in the mitochondrion inner membrane. The protein localises to the cell projection. It localises to the dendrite. The enzyme catalyses K(+)(in) = K(+)(out). The catalysed reaction is Na(+)(in) = Na(+)(out). Its activity is regulated as follows. Inhibited by extracellular acidification. K(+) channel that conducts voltage-dependent outward rectifying currents upon membrane depolarization. Voltage sensing is coupled to K(+) electrochemical gradient in an 'ion flux gating' mode where outward but not inward ion flow opens the gate. Changes ion selectivity and becomes permeable to Na(+) ions in response to extracellular acidification. Protonation of the pH sensor His-98 stabilizes C-type inactivation conformation likely converting the channel from outward K(+)-conducting, to inward Na(+)-conducting to nonconductive state. Homo- and heterodimerizes to form functional channels with distinct regulatory and gating properties. Allows K(+) currents with fast-gating kinetics important for the repolarization and hyperpolarization phases of action potentials. In granule neurons, hyperpolarizes the resting membrane potential to limit intrinsic neuronal excitability, but once the action potential threshold is reached, supports high-frequency action potential firing and increased neuronal excitability. Homomeric and/or heteromeric KCNK3:KCNK9 channels operate in cerebellar granule cells, whereas heteromeric KCNK1:KCNK9 enables currents in hippocampal dentate gyrus granule neurons. Dispensable for central chemosensory respiration i.e. breathing controlled by brainstem CO2/pH, it rather conducts pH-sensitive currents and controls the firing rate of serotonergic raphe neurons involved in potentiation of the respiratory chemoreflex. In retinal ganglion cells, mediates outward rectifying currents that regulate action potentials in response to acidification of the synaptic cleft. Involved in transmission of image-forming and nonimage-forming visual information in the retina. In adrenal gland, contributes to the maintenance of a hyperpolarized resting membrane potential of aldosterone-producing cells at zona glomerulosa and limits aldosterone release as part of a regulatory mechanism that controls arterial blood pressure and electrolyte homeostasis. The polypeptide is Potassium channel subfamily K member 9 (KCNK9) (Cavia porcellus (Guinea pig)).